Reading from the N-terminus, the 187-residue chain is Ubiquinone biosynthesis protein COQ4 homolog, mitochondrial (187 aa).

Residues H77, D78, H81, and E93 each contribute to the Zn(2+) site.

Belongs to the COQ4 family. As to quaternary structure, component of a multi-subunit COQ enzyme complex. It depends on Zn(2+) as a cofactor.

The protein resides in the mitochondrion inner membrane. It carries out the reaction a 4-hydroxy-3-methoxy-5-(all-trans-polyprenyl)benzoate + H(+) = a 2-methoxy-6-(all-trans-polyprenyl)phenol + CO2. It participates in cofactor biosynthesis; ubiquinone biosynthesis. Functionally, lyase that catalyzes the C1-decarboxylation of 4-hydroxy-3-methoxy-5-(all-trans-polyprenyl)benzoic acid into 2-methoxy-6-(all-trans-polyprenyl)phenol during ubiquinone biosynthesis. The protein is Ubiquinone biosynthesis protein COQ4 homolog, mitochondrial of Leishmania major.